We begin with the raw amino-acid sequence, 297 residues long: Light-independent protochlorophyllide reductase iron-sulfur ATP-binding protein (297 aa).

Residues glycine 41–threonine 46 and lysine 70 each bind ATP. Serine 45 lines the Mg(2+) pocket. 2 residues coordinate [4Fe-4S] cluster: cysteine 126 and cysteine 160. ATP-binding positions include asparagine 211–arginine 212 and proline 235–leucine 237.

It belongs to the NifH/BchL/ChlL family. In terms of assembly, homodimer. Protochlorophyllide reductase is composed of three subunits; BchL, BchN and BchB. [4Fe-4S] cluster is required as a cofactor.

It carries out the reaction chlorophyllide a + oxidized 2[4Fe-4S]-[ferredoxin] + 2 ADP + 2 phosphate = protochlorophyllide a + reduced 2[4Fe-4S]-[ferredoxin] + 2 ATP + 2 H2O. It functions in the pathway porphyrin-containing compound metabolism; bacteriochlorophyll biosynthesis (light-independent). In terms of biological role, component of the dark-operative protochlorophyllide reductase (DPOR) that uses Mg-ATP and reduced ferredoxin to reduce ring D of protochlorophyllide (Pchlide) to form chlorophyllide a (Chlide). This reaction is light-independent. The L component serves as a unique electron donor to the NB-component of the complex, and binds Mg-ATP. The polypeptide is Light-independent protochlorophyllide reductase iron-sulfur ATP-binding protein (Methylobacterium radiotolerans (strain ATCC 27329 / DSM 1819 / JCM 2831 / NBRC 15690 / NCIMB 10815 / 0-1)).